We begin with the raw amino-acid sequence, 210 residues long: Dephospho-CoA kinase (210 aa).

The DPCK domain maps to 18 to 210; that stretch reads RIGITGGIAS…LSYPQVEVLL (193 aa). 26 to 31 provides a ligand contact to ATP; that stretch reads ASGKTS.

It belongs to the CoaE family.

The protein localises to the cytoplasm. It carries out the reaction 3'-dephospho-CoA + ATP = ADP + CoA + H(+). Its pathway is cofactor biosynthesis; coenzyme A biosynthesis; CoA from (R)-pantothenate: step 5/5. In terms of biological role, catalyzes the phosphorylation of the 3'-hydroxyl group of dephosphocoenzyme A to form coenzyme A. This chain is Dephospho-CoA kinase, found in Prochlorococcus marinus (strain SARG / CCMP1375 / SS120).